The primary structure comprises 201 residues: Histidinol dehydrogenase (201 aa).

Belongs to the histidinol dehydrogenase family. Homodimer. It depends on Zn(2+) as a cofactor.

It catalyses the reaction L-histidinol + 2 NAD(+) + H2O = L-histidine + 2 NADH + 3 H(+). It participates in amino-acid biosynthesis; L-histidine biosynthesis; L-histidine from 5-phospho-alpha-D-ribose 1-diphosphate: step 9/9. Its function is as follows. Catalyzes the sequential NAD-dependent oxidations of L-histidinol to L-histidinaldehyde and then to L-histidine. The chain is Histidinol dehydrogenase (hisD) from Buchnera aphidicola subsp. Diuraphis noxia.